The chain runs to 259 residues: Ribosomal RNA small subunit methyltransferase J (259 aa).

S-adenosyl-L-methionine-binding positions include R101–D102, E117–R118, S153–S154, and D176.

Belongs to the methyltransferase superfamily. RsmJ family.

The protein localises to the cytoplasm. The enzyme catalyses guanosine(1516) in 16S rRNA + S-adenosyl-L-methionine = N(2)-methylguanosine(1516) in 16S rRNA + S-adenosyl-L-homocysteine + H(+). Functionally, specifically methylates the guanosine in position 1516 of 16S rRNA. The chain is Ribosomal RNA small subunit methyltransferase J from Vibrio vulnificus (strain YJ016).